The following is a 353-amino-acid chain: tRNA-specific 2-thiouridylase MnmA 2 (353 aa).

ATP is bound by residues 9-16 (AMSGGVDS) and methionine 35. The active-site Nucleophile is the cysteine 98. Cysteine 98 and cysteine 194 form a disulfide bridge. Glycine 122 serves as a coordination point for ATP. The tract at residues 144-146 (KDQ) is interaction with tRNA. The active-site Cysteine persulfide intermediate is cysteine 194. The interaction with tRNA stretch occupies residues 300–301 (RY).

It belongs to the MnmA/TRMU family.

The protein resides in the cytoplasm. The catalysed reaction is S-sulfanyl-L-cysteinyl-[protein] + uridine(34) in tRNA + AH2 + ATP = 2-thiouridine(34) in tRNA + L-cysteinyl-[protein] + A + AMP + diphosphate + H(+). Functionally, catalyzes the 2-thiolation of uridine at the wobble position (U34) of tRNA, leading to the formation of s(2)U34. The protein is tRNA-specific 2-thiouridylase MnmA 2 of Clostridium botulinum (strain Loch Maree / Type A3).